We begin with the raw amino-acid sequence, 70 residues long: Large ribosomal subunit protein bL31 (70 aa).

The protein belongs to the bacterial ribosomal protein bL31 family. Type A subfamily. In terms of assembly, part of the 50S ribosomal subunit.

Its function is as follows. Binds the 23S rRNA. The polypeptide is Large ribosomal subunit protein bL31 (Mycoplasma mobile (strain ATCC 43663 / 163K / NCTC 11711) (Mesomycoplasma mobile)).